The sequence spans 499 residues: Protein adenylyltransferase Fic (499 aa).

The helical transmembrane segment at 38–58 threads the bilayer; that stretch reads FHYFVIFASGSLFSGLMFGLL. TPR repeat units follow at residues 126-159 and 160-194; these read ALSS…SPKH and PEIL…NPSH. Positions 251–256 match the Inhibitory (S/T)XXXE(G/N) motif motif; it reads SVGIEG. ATP-binding positions include Glu255 and 337 to 340; that span reads VGGH. Residues 306–441 enclose the Fido domain; the sequence is ITLKDILEIH…IRPFVRFIAD (136 aa). Residue His384 is part of the active site. Residues 388–395, 420–421, and Asn428 each bind ATP; these read DGNGRTSR and YY.

This sequence belongs to the fic family. In terms of assembly, homodimer.

The protein localises to the membrane. It carries out the reaction L-tyrosyl-[protein] + ATP = O-(5'-adenylyl)-L-tyrosyl-[protein] + diphosphate. The catalysed reaction is L-threonyl-[protein] + ATP = 3-O-(5'-adenylyl)-L-threonyl-[protein] + diphosphate. The enzyme catalyses 3-O-(5'-adenylyl)-L-threonyl-[protein] + H2O = L-threonyl-[protein] + AMP + H(+). The side chain of Glu-255 determines which of the two opposing activities (AMPylase or de-AMPylase) will take place. In response to endoplasmic reticulum stress, mediates de-AMPylase activity. Adenylyltransferase activity is inhibited by the inhibitory helix present at the N-terminus: Glu-255 binds ATP and competes with ATP-binding at Arg-395, thereby preventing adenylyltransferase activity. In unstressed cells, disengagement of Glu-255 promotes adenylyltransferase activity. Activation dissociates ATP-binding from Glu-255, allowing ordered binding of the entire ATP moiety with the alpha-phosphate in an orientation that is productive for accepting an incoming target hydroxyl side chain. Protein that can both mediate the addition of adenosine 5'-monophosphate (AMP) to specific residues of target proteins (AMPylation), and the removal of the same modification from target proteins (de-AMPylation), depending on the context. The side chain of Glu-255 determines which of the two opposing activities (AMPylase or de-AMPylase) will take place. Acts as a key regulator of the unfolded protein response (UPR) by mediating AMPylation or de-AMPylation of Hsc70-3/BiP. In unstressed cells, acts as an adenylyltransferase by mediating AMPylation of Hsc70-3/BiP at 'Thr-518', thereby inactivating it. In response to endoplasmic reticulum stress, acts as a phosphodiesterase by mediating removal of ATP (de-AMPylation) from Hsc70-3/BiP at 'Thr-518', leading to restore HSPA5/BiP activity. This is Protein adenylyltransferase Fic from Aedes aegypti (Yellowfever mosquito).